Here is a 554-residue protein sequence, read N- to C-terminus: Arginine--tRNA ligase (554 aa).

Positions 129 to 139 (ANPTGPLHIGH) match the 'HIGH' region motif.

It belongs to the class-I aminoacyl-tRNA synthetase family. As to quaternary structure, monomer.

Its subcellular location is the cytoplasm. It carries out the reaction tRNA(Arg) + L-arginine + ATP = L-arginyl-tRNA(Arg) + AMP + diphosphate. The sequence is that of Arginine--tRNA ligase from Geobacter sp. (strain M21).